The primary structure comprises 289 residues: tRNA dimethylallyltransferase (289 aa).

Residue 9 to 16 (GTTASGKT) coordinates ATP. A substrate-binding site is contributed by 11-16 (TASGKT). The interval 34–37 (DSLC) is interaction with substrate tRNA.

The protein belongs to the IPP transferase family. In terms of assembly, monomer. Mg(2+) serves as cofactor.

It catalyses the reaction adenosine(37) in tRNA + dimethylallyl diphosphate = N(6)-dimethylallyladenosine(37) in tRNA + diphosphate. In terms of biological role, catalyzes the transfer of a dimethylallyl group onto the adenine at position 37 in tRNAs that read codons beginning with uridine, leading to the formation of N6-(dimethylallyl)adenosine (i(6)A). The protein is tRNA dimethylallyltransferase of Campylobacter jejuni subsp. jejuni serotype O:23/36 (strain 81-176).